Consider the following 128-residue polypeptide: Infection structure-specific protein 56 (128 aa).

Composition is skewed to polar residues over residues histidine 27 to histidine 36 and threonine 87 to serine 101. 2 disordered regions span residues histidine 27–serine 48 and glycine 86–alanine 128. The segment covering lysine 115–alanine 128 has biased composition (basic and acidic residues).

Functionally, general role in the development of germlings including formation of the infection structures. The polypeptide is Infection structure-specific protein 56 (INF56) (Uromyces appendiculatus (Rust fungus)).